A 494-amino-acid chain; its full sequence is DnaJ-related protein rsp1 (494 aa).

The J domain maps to 12–78; that stretch reads DYYTILGAES…KLRELFDQRR (67 aa). Over residues 229–242 the composition is skewed to polar residues; sequence SEISNGLNSNGVEN. Residues 229–354 form a disordered region; the sequence is SEISNGLNSN…NDSTSNSTEY (126 aa). Residues 243 to 256 are compositionally biased toward low complexity; the sequence is SSITKSSPRSSSSS. Residues 270–287 are compositionally biased toward polar residues; it reads IFTSPNTPEHPSVYQTDI. Residues 321-331 are compositionally biased toward low complexity; the sequence is LSRSKSSSLSR. Over residues 332–354 the composition is skewed to polar residues; the sequence is NQTRSQLNDLSAENDSTSNSTEY.

Interacts iwth ssa1.

Its subcellular location is the cytoplasm. It localises to the cytoskeleton. It is found in the nucleus. Its function is as follows. Has a role in the proper organization of the interphase microtubule cytoskeleton. Required for equatorial microtubule organizing center (eMTOC) disassembly into satellites, contributing to the dynamic redistribution of MTOC components for organization of interphase microtubules. The protein is DnaJ-related protein rsp1 (rsp1) of Schizosaccharomyces pombe (strain 972 / ATCC 24843) (Fission yeast).